A 190-amino-acid polypeptide reads, in one-letter code: WYSSMFAANIKQEPMSHHHHHSHHHGHHHMLQHSNSNRNASSPRQSPLPSPNPPSSSNLHLEQYLKQQHQQHQQQQQQPMDTLCAAAMTPSPSNNDQNSPLTPPGLPNPMQIIMPANMRPATQPTPTIATPTTTSSAIVALQTNDKLQALTPPMDVTPPKSPAKSQQSCAEPEKDHDLISNSSEDMKYMA.

Disordered stretches follow at residues 13 to 59 (EPMS…SSNL), 86 to 110 (AAMT…PNPM), and 142 to 190 (QTND…KYMA). Basic residues predominate over residues 17 to 31 (HHHHHSHHHGHHHML). The span at 90–100 (PSPSNNDQNSP) shows a compositional bias: polar residues. Over residues 171 to 190 (EPEKDHDLISNSSEDMKYMA) the composition is skewed to basic and acidic residues.

It belongs to the hunchback C2H2-type zinc-finger protein family.

It localises to the nucleus. Gap class segmentation protein that controls development of head structures. The chain is Protein hunchback (hb) from Scaptomyza crassifemur (Fruit fly).